We begin with the raw amino-acid sequence, 178 residues long: Non-specific lipid transfer protein-like 1 (178 aa).

Positions 1-26 are cleaved as a signal peptide; sequence MAVAARAAAVACLLVVGLAAVAGVDG. 2 disulfide bridges follow: C50–C68 and C69–C110. A glycan (N-linked (GlcNAc...) asparagine) is linked at N99. The GPI-anchor amidated alanine moiety is linked to residue A149. Positions 150–178 are cleaved as a propeptide — removed in mature form; it reads AARSPMASTTAVLVVAAAVAAPLLAFFHF.

Belongs to the plant LTP family. O-glycosylated on hydroxyprolines; noncontiguous hydroxylproline residues are glycosylated with arabinogalactan. In terms of tissue distribution, expressed in roots, stems, leaves, flowers and seeds.

Its subcellular location is the vacuole. The protein localises to the aleurone grain membrane. The protein is Non-specific lipid transfer protein-like 1 (LTPL1) of Oryza sativa subsp. japonica (Rice).